Reading from the N-terminus, the 120-residue chain is Large ribosomal subunit protein uL18 (120 aa).

It belongs to the universal ribosomal protein uL18 family. In terms of assembly, part of the 50S ribosomal subunit; part of the 5S rRNA/L5/L18/L25 subcomplex. Contacts the 5S and 23S rRNAs.

Its function is as follows. This is one of the proteins that bind and probably mediate the attachment of the 5S RNA into the large ribosomal subunit, where it forms part of the central protuberance. The protein is Large ribosomal subunit protein uL18 of Azorhizobium caulinodans (strain ATCC 43989 / DSM 5975 / JCM 20966 / LMG 6465 / NBRC 14845 / NCIMB 13405 / ORS 571).